Reading from the N-terminus, the 149-residue chain is Large ribosomal subunit protein bL9 (149 aa).

This sequence belongs to the bacterial ribosomal protein bL9 family.

Functionally, binds to the 23S rRNA. This chain is Large ribosomal subunit protein bL9, found in Thermotoga maritima (strain ATCC 43589 / DSM 3109 / JCM 10099 / NBRC 100826 / MSB8).